A 44-amino-acid polypeptide reads, in one-letter code: Photosystem I reaction center subunit IX (44 aa).

The helical transmembrane segment at 9–29 (WFRSAPVVATIWIVLTAGILV) threads the bilayer.

This sequence belongs to the PsaJ family.

Its subcellular location is the cellular thylakoid membrane. Functionally, may help in the organization of the PsaE and PsaF subunits. In Prochlorococcus marinus (strain MIT 9211), this protein is Photosystem I reaction center subunit IX.